Reading from the N-terminus, the 145-residue chain is 3-hydroxyacyl-[acyl-carrier-protein] dehydratase FabZ (145 aa).

His-47 is an active-site residue.

This sequence belongs to the thioester dehydratase family. FabZ subfamily.

The protein localises to the cytoplasm. The enzyme catalyses a (3R)-hydroxyacyl-[ACP] = a (2E)-enoyl-[ACP] + H2O. In terms of biological role, involved in unsaturated fatty acids biosynthesis. Catalyzes the dehydration of short chain beta-hydroxyacyl-ACPs and long chain saturated and unsaturated beta-hydroxyacyl-ACPs. This is 3-hydroxyacyl-[acyl-carrier-protein] dehydratase FabZ from Chromohalobacter salexigens (strain ATCC BAA-138 / DSM 3043 / CIP 106854 / NCIMB 13768 / 1H11).